The chain runs to 638 residues: UvrABC system protein C (638 aa).

A GIY-YIG domain is found at 20–97 (ECAGVYQMFD…IKKFQPKFNI (78 aa)). Positions 209–244 (KELQENLSKKMEELSSHMYFEEAAEIRDRIKALSYV) constitute a UVR domain.

This sequence belongs to the UvrC family. In terms of assembly, interacts with UvrB in an incision complex.

It is found in the cytoplasm. Its function is as follows. The UvrABC repair system catalyzes the recognition and processing of DNA lesions. UvrC both incises the 5' and 3' sides of the lesion. The N-terminal half is responsible for the 3' incision and the C-terminal half is responsible for the 5' incision. This Rickettsia canadensis (strain McKiel) protein is UvrABC system protein C.